Reading from the N-terminus, the 504-residue chain is Acetyltransferase pyiB (504 aa).

Residues 1–18 (MGFLSAGGLWASLFRARI) form the signal peptide. An N-linked (GlcNAc...) asparagine glycan is attached at N84. H181 (proton acceptor) is an active-site residue. Residues N413 and N467 are each glycosylated (N-linked (GlcNAc...) asparagine).

It belongs to the plant acyltransferase family.

It functions in the pathway mycotoxin biosynthesis. In terms of biological role, acetyltransferase; part of the gene cluster that mediates the biosynthesis of the mycotoxin pyrichalasin H, a tyrosine-derived cytochalasan that inhibits the growth of rice seedlings, but also inhibits lymphocyte capping and actin polymerization and alters cell morphology. Pyrichalasin H is indicated as the responsible agent for the genus-specific pathogenicity of M.grisea toward crabgrass. The first step in the pathway is catalyzed by the O-methyltransferase pyiA which methylates free tyrosine to generate the precursor O-methyltyrosine. The hybrid PKS-NRPS pyiS, assisted by the enoyl reductase pyiC, are responsible for fusion of the O-methyltyrosine precursor and the polyketide backbone. The polyketide synthase module (PKS) of pyiS is responsible for the synthesis of the polyketide backbone and the downstream nonribosomal peptide synthetase (NRPS) amidates the carboxyl end of the polyketide with the O-methyltyrosine precursor. As the NRPS A-domain demonstrates substrate tolerance, pyiS can also use phenylalanine, tyrosine and even para-chlorophenylalanine as amino acid precursor, which leads to the production of novel cytochalasans, including halogenated cytochalasans. Because pyiS lacks a designated enoylreductase (ER) domain, the required activity is provided the enoyl reductase pyiC. Reduction by the hydrolyase pyiE leads to 1,5-dihydropyrrolone, which is substrate for dehydration and intra-molecular Diels-Alder cyclization by the Diels-Alderase pyiF to yield the required isoindolone-fused macrocycle. The tailoring cytochrome P450 monooxygenases piyD and piyG catalyze the hydroxylation at C-18 and C-7, respectivily, whereas the short-chain dehydrogenase/reductase pyiH reduces the carbonyl at C-21 in preparation for the transfer of an acetyl group by the acetyltransferase pyiB. These 3 reactions whose order is not clear yet, lead to the production of O-methylpyrichalasin J, a deacetylated pyrichalasin H. Finally, pyiB to converts O-methylpyrichalasin J into the final product pyrichalasin H via acetylation of C-21. The sequence is that of Acetyltransferase pyiB from Pyricularia grisea (Crabgrass-specific blast fungus).